We begin with the raw amino-acid sequence, 345 residues long: Uroporphyrinogen decarboxylase (345 aa).

Substrate is bound by residues 30 to 34 (RQAGR), Asp-79, Tyr-154, Ser-209, and His-322.

Belongs to the uroporphyrinogen decarboxylase family. As to quaternary structure, homodimer.

The protein localises to the cytoplasm. It catalyses the reaction uroporphyrinogen III + 4 H(+) = coproporphyrinogen III + 4 CO2. Its pathway is porphyrin-containing compound metabolism; protoporphyrin-IX biosynthesis; coproporphyrinogen-III from 5-aminolevulinate: step 4/4. Its function is as follows. Catalyzes the decarboxylation of four acetate groups of uroporphyrinogen-III to yield coproporphyrinogen-III. In Nocardioides sp. (strain ATCC BAA-499 / JS614), this protein is Uroporphyrinogen decarboxylase.